Consider the following 152-residue polypeptide: UPF0178 protein KPN78578_03210 (152 aa).

It belongs to the UPF0178 family.

The protein is UPF0178 protein KPN78578_03210 of Klebsiella pneumoniae subsp. pneumoniae (strain ATCC 700721 / MGH 78578).